A 767-amino-acid polypeptide reads, in one-letter code: V-set and immunoglobulin domain-containing protein 10-like 2 (767 aa).

The first 28 residues, 1-28 (MVGQRAQHSPVSLLLLIHLCLLHLRASG), serve as a signal peptide directing secretion. Ig-like domains lie at 34–140 (PEAP…SHLT), 150–234 (PQVR…AFLD), and 242–324 (PVIT…TTVQ). 3 disulfides stabilise this stretch: C56-C122, C169-C217, and C268-C308. Residue N376 is glycosylated (N-linked (GlcNAc...) asparagine). 2 Ig-like domains span residues 399 to 499 (PALA…LQLE) and 501 to 593 (PQLD…VLLE). 2 disulfides stabilise this stretch: C435–C481 and C522–C577. The Fibronectin type-III domain occupies 599–699 (APPNVTISRL…EVKIPADPPF (101 aa)). N602 and N628 each carry an N-linked (GlcNAc...) asparagine glycan. Residues 704–724 (AVLGAAGTGMVVATVASLLVF) form a helical membrane-spanning segment. Residues 735-754 (PRLETPTTTPGLDPAQETTD) are disordered. Residues 739 to 754 (TPTTTPGLDPAQETTD) show a composition bias toward polar residues.

The protein resides in the membrane. The protein is V-set and immunoglobulin domain-containing protein 10-like 2 of Homo sapiens (Human).